Here is a 124-residue protein sequence, read N- to C-terminus: BLOC-1-related complex subunit 8 (124 aa).

The tract at residues 102–124 (SSSQGRSAVINPNETPAHTSVTP) is disordered.

It belongs to the BORCS8 family.

The protein resides in the lysosome membrane. As part of a BORC-like complex, it may play a role in the movement and localization of lysosomes at the cell periphery. Associated with the cytosolic face of lysosomes, this complex may couple lysosomes to microtubule plus-end-directed kinesin motors, driving lysosome movement toward the cell periphery. The polypeptide is BLOC-1-related complex subunit 8 (Danio rerio (Zebrafish)).